Reading from the N-terminus, the 378-residue chain is Putative odorant receptor 71a (378 aa).

At 1-37 the chain is on the cytoplasmic side; that stretch reads MDYDRIRPVRFLTGVLKWWRLWPRKESVSTPDWTNWQ. Residues 38–58 form a helical membrane-spanning segment; the sequence is AYALHVPFTFLFVLLLWLEAI. Topologically, residues 59–66 are extracellular; it reads KSRDIQHT. Residues 67-87 form a helical membrane-spanning segment; the sequence is ADVLLICLTTTALGGKVINIW. At 88-127 the chain is on the cytoplasmic side; that stretch reads KYAHVAQGILSEWSTWDLFELRSKQEVDMWRFEHRRFNRV. The chain crosses the membrane as a helical span at residues 128 to 148; that stretch reads FMFYCLCSAGVIPFIVIQPLF. Residues 149-166 are Extracellular-facing; the sequence is DIPNRLPFWMWTPFDWQQ. A helical membrane pass occupies residues 167–187; sequence PVLFWYAFIYQATTIPIACAC. Residues 188–255 are Cytoplasmic-facing; that stretch reads NVTMDAVNWY…IFISKSTFTQ (68 aa). A helical membrane pass occupies residues 256 to 276; that stretch reads ILVSSLIICFTIYSMQMSPVL. Over 277 to 280 the chain is Extracellular; it reads QDLP. Residues 281–301 form a helical membrane-spanning segment; the sequence is GFAAMMQYLVAMIMQVMLPTI. Residues 302–343 lie on the Cytoplasmic side of the membrane; sequence YGNAVIDSANMLTDSMYNSDWPDMNCRMRRLVLMFMVYLNRP. A helical membrane pass occupies residues 344–364; that stretch reads VTLKAGGFFHIGLPLFTKTMN. Over 365-378 the chain is Extracellular; sequence QAYSLLALLLNMNQ.

Belongs to the insect chemoreceptor superfamily. Heteromeric odorant receptor channel (TC 1.A.69) family. Or2a subfamily. As to quaternary structure, interacts with Orco. Complexes exist early in the endomembrane system in olfactory sensory neurons (OSNs), coupling these complexes to the conserved ciliary trafficking pathway. Expressed in olfactory sensory neurons in the maxillary palp.

The protein localises to the cell membrane. In terms of biological role, odorant receptor which mediates acceptance or avoidance behavior, depending on its substrates. The odorant receptor repertoire encodes a large collection of odor stimuli that vary widely in identity, intensity, and duration. May form a complex with Orco to form odorant-sensing units, providing sensitive and prolonged odorant signaling and calcium permeability. The sequence is that of Putative odorant receptor 71a (Or71a) from Drosophila melanogaster (Fruit fly).